The sequence spans 220 residues: Aklanonic acid methyltransferase DauC (220 aa).

It belongs to the methyltransferase superfamily. DnrC family. As to quaternary structure, homodimer.

It catalyses the reaction aklanonate + S-adenosyl-L-methionine = methyl aklanonate + S-adenosyl-L-homocysteine. Its pathway is antibiotic biosynthesis; daunorubicin biosynthesis. It functions in the pathway antibiotic biosynthesis; carminomycin biosynthesis. It participates in antibiotic biosynthesis; rhodomycin biosynthesis. The protein operates within antibiotic biosynthesis; aclacinomycin biosynthesis. In terms of biological role, involved in the biosynthesis of aklavinone which is an important precursor common to the formation of the clinically significant anthracyclines such as carminomycin, daunorubicin (daunomycin), rhodomycin, aclacinomycin T (aklavin) and aclacinomycin A (aclarubicin). These compounds are aromatic polyketide antibiotics that exhibit high cytotoxicity and are widely applied in the chemotherapy of a variety of cancers. Catalyzes the methyl esterification of aklanonic acid to yield aklanonic acid methyl ester. This is Aklanonic acid methyltransferase DauC (dauC) from Streptomyces sp. (strain C5).